An 867-amino-acid polypeptide reads, in one-letter code: Schizokinen transporter SchT (867 aa).

The interval 40-62 (HPGKTQEAPSPTQLNTQSPAPNA) is disordered. Polar residues predominate over residues 46 to 62 (EAPSPTQLNTQSPAPNA). Residues 185 to 192 (IELVVTAT) carry the TonB box motif. The region spanning 197–307 (PIQNVPRSIT…TGGVINIITR (111 aa)) is the TBDR plug domain. The 555-residue stretch at 313–867 (KLTSRTEVGV…TLSIKYSFDW (555 aa)) folds into the TBDR beta-barrel domain. The TonB C-terminal box signature appears at 850–867 (AYAAARGRTLSIKYSFDW).

This sequence belongs to the TonB-dependent receptor family.

Its subcellular location is the cell outer membrane. Functionally, involved in the TonB-dependent uptake of iron in complex with schizokinen, a dihydroxamate-type siderophore. The chain is Schizokinen transporter SchT from Nostoc sp. (strain PCC 7120 / SAG 25.82 / UTEX 2576).